Consider the following 100-residue polypeptide: Urease subunit gamma (100 aa).

Belongs to the urease gamma subunit family. As to quaternary structure, heterotrimer of UreA (gamma), UreB (beta) and UreC (alpha) subunits. Three heterotrimers associate to form the active enzyme.

The protein localises to the cytoplasm. The enzyme catalyses urea + 2 H2O + H(+) = hydrogencarbonate + 2 NH4(+). Its pathway is nitrogen metabolism; urea degradation; CO(2) and NH(3) from urea (urease route): step 1/1. The sequence is that of Urease subunit gamma from Stutzerimonas stutzeri (strain A1501) (Pseudomonas stutzeri).